A 312-amino-acid polypeptide reads, in one-letter code: Ribonuclease HIII (312 aa).

In terms of domain architecture, RNase H type-2 spans 95–311; it reads FNCIGSDEAG…REKAQKILKP (217 aa). A divalent metal cation is bound by residues D101, E102, and D206.

This sequence belongs to the RNase HII family. RnhC subfamily. Mn(2+) serves as cofactor. Requires Mg(2+) as cofactor.

Its subcellular location is the cytoplasm. It catalyses the reaction Endonucleolytic cleavage to 5'-phosphomonoester.. Endonuclease that specifically degrades the RNA of RNA-DNA hybrids. This is Ribonuclease HIII from Staphylococcus aureus (strain Mu3 / ATCC 700698).